Consider the following 434-residue polypeptide: MMHSAKNVCRTCMDETGTLVDIFANVRDPVLDEPEMSLSHILARCTERPVKRGDLLPQFICVSCVLAVQNAFRFKWQSEQSYQHFFRVLNQSGAPENQVHLAACNGDKNQIINQKMQLKSDRQQDTQQMTKTQKPDDDLSQKQTLQAKLQEGNIDGPPESFTLHPRKRTCRTEEQADMIPKEATRSTKMICDADGYYNCPHCSKRFCSQTQLRTHITDLCNRCPYCPRTYMQKSNLKRHLRNHLSKPAHKCFHCSKAFMRKDHLKRHLRTHDSDGPLSCSQCSAVFIEHVQLEIHRREHKQRPGSSKSESTKDPDSDDSDQAQDLKPKWTKNTFNGTCSIPPMLKPKPICDICQKKFSSVYALKRHMLTHNRQHHLKKCTYCSEEFKTEKHLKRHERGHMGDLFRCEFCSLVFVDVNYLRKHKKRIHSNNVIAM.

One can recognise a ZAD domain in the interval 7–88 (NVCRTCMDET…EQSYQHFFRV (82 aa)). Positions 9, 12, 61, and 64 each coordinate Zn(2+). A disordered region spans residues 117–173 (QLKSDRQQDTQQMTKTQKPDDDLSQKQTLQAKLQEGNIDGPPESFTLHPRKRTCRTE). The C2H2-type 1; degenerate zinc finger occupies 197 to 219 (YNCPHCSKRFCSQTQLRTHITDL). 3 consecutive C2H2-type zinc fingers follow at residues 221–243 (NRCP…LRNH), 249–271 (HKCF…LRTH), and 277–299 (LSCS…RREH). A disordered region spans residues 295–328 (HRREHKQRPGSSKSESTKDPDSDDSDQAQDLKPK). Phosphoserine occurs at positions 316 and 319. 3 C2H2-type zinc fingers span residues 348–370 (PICD…MLTH), 377–399 (KKCT…ERGH), and 404–427 (FRCE…KRIH).

Homodimer; mediated by the ZAD domain. Interacts (via C2H2 type zinc finger 4) with rhi/rhino (via Chromo domain). Dimerization is required for association with DNA and interaction with rhi/rhino. As to expression, primarily expressed in ovaries and absent from testes. In ovaries very low levels in germline stem cells and cystoblasts but abundant in developing cysts and polyploid nurse cells.

The protein resides in the nucleus. The protein localises to the chromosome. Its function is as follows. DNA-binding zinc finger protein that recruits chromo domain protein rhino/rhi to specific chromatin regions enriched in H3K9me2/3 histone methylation, mediating piRNA (piwi-interacting RNA) biogenesis. May bind to GC rich DNA sequences including a 5'-GRGGN-3' sequence motif. Nucleates rhi/rhino accumulation and stabilizes its expansion. Involved in piRNA transposon repression, particularly in the female ovary during oogenesis. The protein is Zinc finger protein kipf of Drosophila melanogaster (Fruit fly).